Reading from the N-terminus, the 236-residue chain is UPF0257 lipoprotein YnfC (236 aa).

The signal sequence occupies residues 1–16; the sequence is MKKPLLLTLLCMILAG. Cysteine 17 is lipidated: N-palmitoyl cysteine. A lipid anchor (S-diacylglycerol cysteine) is attached at cysteine 17.

Belongs to the UPF0257 family.

It is found in the cell membrane. This Salmonella schwarzengrund (strain CVM19633) protein is UPF0257 lipoprotein YnfC.